Reading from the N-terminus, the 211-residue chain is Dephospho-CoA kinase (211 aa).

A DPCK domain is found at 7–211 (LIGVIGRSGA…ILTRRGVLGE (205 aa)). ATP is bound at residue 15–20 (GAGKNV).

This sequence belongs to the CoaE family.

It localises to the cytoplasm. The enzyme catalyses 3'-dephospho-CoA + ATP = ADP + CoA + H(+). It functions in the pathway cofactor biosynthesis; coenzyme A biosynthesis; CoA from (R)-pantothenate: step 5/5. Its function is as follows. Catalyzes the phosphorylation of the 3'-hydroxyl group of dephosphocoenzyme A to form coenzyme A. The polypeptide is Dephospho-CoA kinase (Treponema pallidum (strain Nichols)).